Reading from the N-terminus, the 347-residue chain is LRP2-binding protein (347 aa).

The TPR repeat unit spans residues 59–92 (TLAYFLRGQLYFEEGWYEEALEQFEEIKEKDHQA). Sel1-like repeat units follow at residues 93 to 125 (TYQL…DSPC), 133 to 168 (FAAA…DNGN), 173 to 206 (VKAQ…GNGN), 207 to 242 (LESQ…ERGN), 243 to 277 (VYAQ…EVHD), and 297 to 332 (AMAS…RLNP).

Interacts with LRP2.

It localises to the cytoplasm. May act as an adapter that regulates LRP2 function. The protein is LRP2-binding protein (LRP2BP) of Homo sapiens (Human).